Reading from the N-terminus, the 138-residue chain is MCQQVVVVANTNNKMKTSYSIKQVLKTLFKKQQKQQQKPQGSLESLESVDNLRNAQVEEAYYAEIDENAANEKLAQLAHSQEFEIVEEQEDEEDVYVPVRFARTTAGTFFWTTNLQPVASVEPAMCYSMQFQDRWAQA.

Belongs to the M4-like protein family.

In terms of biological role, part of the Notch signaling pathway. This Drosophila melanogaster (Fruit fly) protein is Enhancer of split malpha protein.